Here is a 203-residue protein sequence, read N- to C-terminus: ATP-dependent Clp protease proteolytic subunit 2 (203 aa).

S98 acts as the Nucleophile in catalysis. H123 is an active-site residue.

It belongs to the peptidase S14 family. Fourteen ClpP subunits assemble into 2 heptameric rings which stack back to back to give a disk-like structure with a central cavity, resembling the structure of eukaryotic proteasomes.

It is found in the cytoplasm. It carries out the reaction Hydrolysis of proteins to small peptides in the presence of ATP and magnesium. alpha-casein is the usual test substrate. In the absence of ATP, only oligopeptides shorter than five residues are hydrolyzed (such as succinyl-Leu-Tyr-|-NHMec, and Leu-Tyr-Leu-|-Tyr-Trp, in which cleavage of the -Tyr-|-Leu- and -Tyr-|-Trp bonds also occurs).. Its function is as follows. Cleaves peptides in various proteins in a process that requires ATP hydrolysis. Has a chymotrypsin-like activity. Plays a major role in the degradation of misfolded proteins. The polypeptide is ATP-dependent Clp protease proteolytic subunit 2 (Chlamydia muridarum (strain MoPn / Nigg)).